The primary structure comprises 143 residues: Large ribosomal subunit protein uL15 (143 aa).

The tract at residues M1–G52 is disordered. A compositionally biased stretch (gly residues) spans R21–S31.

This sequence belongs to the universal ribosomal protein uL15 family. Part of the 50S ribosomal subunit.

In terms of biological role, binds to the 23S rRNA. The protein is Large ribosomal subunit protein uL15 of Francisella tularensis subsp. mediasiatica (strain FSC147).